A 37-amino-acid polypeptide reads, in one-letter code: Cytochrome b6-f complex subunit 5 (37 aa).

The helical transmembrane segment at 5 to 25 (LLSGIVLGLIPITLAGLFVTA) threads the bilayer.

The protein belongs to the PetG family. The 4 large subunits of the cytochrome b6-f complex are cytochrome b6, subunit IV (17 kDa polypeptide, PetD), cytochrome f and the Rieske protein, while the 4 small subunits are PetG, PetL, PetM and PetN. The complex functions as a dimer.

The protein resides in the plastid. It localises to the chloroplast thylakoid membrane. Functionally, component of the cytochrome b6-f complex, which mediates electron transfer between photosystem II (PSII) and photosystem I (PSI), cyclic electron flow around PSI, and state transitions. PetG is required for either the stability or assembly of the cytochrome b6-f complex. The polypeptide is Cytochrome b6-f complex subunit 5 (Chaetosphaeridium globosum (Charophycean green alga)).